The sequence spans 240 residues: Probable transcriptional regulatory protein HP_0162 (240 aa).

This sequence belongs to the TACO1 family.

The protein resides in the cytoplasm. This chain is Probable transcriptional regulatory protein HP_0162, found in Helicobacter pylori (strain ATCC 700392 / 26695) (Campylobacter pylori).